The chain runs to 217 residues: Trimethylamine corrinoid protein 2 (217 aa).

The 92-residue stretch at 1 to 92 (MAGKEEIIAK…EMEKRKAKTT (92 aa)) folds into the B12-binding N-terminal domain. One can recognise a B12-binding domain in the interval 94–217 (LGTVIIGTIE…VNKIKAAIKS (124 aa)). Residue H107 participates in methylcob(III)alamin binding.

This sequence belongs to the methylamine corrinoid protein family. In terms of assembly, can form a complex with MttB.

Its pathway is one-carbon metabolism; methanogenesis from trimethylamine. Its function is as follows. Acts probably as a methyl group carrier between MttB and either MtbA or MtaA. This is Trimethylamine corrinoid protein 2 (mttC2) from Methanosarcina acetivorans (strain ATCC 35395 / DSM 2834 / JCM 12185 / C2A).